Here is a 256-residue protein sequence, read N- to C-terminus: Imidazole glycerol phosphate synthase subunit hisF1 (256 aa).

Active-site residues include D12 and D131.

Belongs to the HisA/HisF family. As to quaternary structure, heterodimer of HisH and HisF.

The protein localises to the cytoplasm. It catalyses the reaction 5-[(5-phospho-1-deoxy-D-ribulos-1-ylimino)methylamino]-1-(5-phospho-beta-D-ribosyl)imidazole-4-carboxamide + L-glutamine = D-erythro-1-(imidazol-4-yl)glycerol 3-phosphate + 5-amino-1-(5-phospho-beta-D-ribosyl)imidazole-4-carboxamide + L-glutamate + H(+). The protein operates within amino-acid biosynthesis; L-histidine biosynthesis; L-histidine from 5-phospho-alpha-D-ribose 1-diphosphate: step 5/9. In terms of biological role, IGPS catalyzes the conversion of PRFAR and glutamine to IGP, AICAR and glutamate. The HisF subunit catalyzes the cyclization activity that produces IGP and AICAR from PRFAR using the ammonia provided by the HisH subunit. The protein is Imidazole glycerol phosphate synthase subunit hisF1 (hisF1) of Pseudomonas aeruginosa (strain ATCC 15692 / DSM 22644 / CIP 104116 / JCM 14847 / LMG 12228 / 1C / PRS 101 / PAO1).